Reading from the N-terminus, the 304-residue chain is Homoserine O-acetyltransferase (304 aa).

Catalysis depends on cysteine 142, which acts as the Acyl-thioester intermediate. Substrate is bound by residues lysine 163 and serine 191. The active-site Proton acceptor is the histidine 234. The active site involves glutamate 236. Arginine 248 contributes to the substrate binding site.

It belongs to the MetA family.

It is found in the cytoplasm. It catalyses the reaction L-homoserine + acetyl-CoA = O-acetyl-L-homoserine + CoA. Its pathway is amino-acid biosynthesis; L-methionine biosynthesis via de novo pathway; O-acetyl-L-homoserine from L-homoserine: step 1/1. Its function is as follows. Transfers an acetyl group from acetyl-CoA to L-homoserine, forming acetyl-L-homoserine. This Thermotoga petrophila (strain ATCC BAA-488 / DSM 13995 / JCM 10881 / RKU-1) protein is Homoserine O-acetyltransferase.